An 823-amino-acid polypeptide reads, in one-letter code: Ankyrin repeat domain-containing protein 20B (823 aa).

6 ANK repeats span residues 32–65 (SELQKIHRAAVKGDAAEVERCLARRSGDLDARDK), 66–95 (QHRTALHLACASGHVQVVTLLVNRKCQIDI), 99–128 (ENRTPLIQAVHCQEEACAVILLKHGANPNL), 132–161 (YGNTALHYAVYSESTSLAEKLLSHGAHIEA), 165–194 (DSNTPLLFAIICKKEKMVEFLLKKKASTHA), and 198–227 (LRRSALMLAVYYDSPGIVSILLKQNIDVFA). 2 disordered regions span residues 302 to 343 (PEKV…GVED) and 355 to 401 (VQTL…QLSE). Basic and acidic residues predominate over residues 372–382 (QERHERSEKKQ). 3 coiled-coil regions span residues 431-480 (KKLK…KQLE), 565-724 (EMIT…NNST), and 776-805 (LVLEEKSKKLMNECDHLKESLFQYEREKAE).

In Homo sapiens (Human), this protein is Ankyrin repeat domain-containing protein 20B (ANKRD20A8P).